A 183-amino-acid chain; its full sequence is UPF0302 protein BH1670 (183 aa).

It belongs to the UPF0302 family.

The chain is UPF0302 protein BH1670 from Halalkalibacterium halodurans (strain ATCC BAA-125 / DSM 18197 / FERM 7344 / JCM 9153 / C-125) (Bacillus halodurans).